A 1007-amino-acid chain; its full sequence is SUPPRESSOR OF ABI3-5 (1007 aa).

2 disordered regions span residues 1–185 (MDPS…RDRE) and 204–269 (ESPH…FSAT). Composition is skewed to basic and acidic residues over residues 40–49 (PDERLMRDDV), 94–120 (YYHD…RYDG), 138–185 (HSRD…RDRE), and 204–214 (ESPHKRYEKSR). Over residues 227-236 (RSPRGRSHGR) the composition is skewed to basic residues. Over residues 237–264 (SYREDSYEGDHWNESERRREYEDRHNQD) the composition is skewed to basic and acidic residues. The RRM 1 domain maps to 272–352 (ATVVVKGLSM…RKLMFHYSQP (81 aa)). The RanBP2-type zinc finger occupies 378 to 407 (VPTDWICTICGCINFARRTSCFQCNEPKTK). The 81-residue stretch at 432 to 512 (HVLVVRGLDE…KILRVAYAKS (81 aa)) folds into the RRM 2 domain. Disordered regions lie at residues 556–581 (GEKQ…SAPQ), 631–656 (PDQN…SQQK), 725–755 (HETQ…STGQ), 771–797 (STSN…TLMG), 810–910 (ASSS…GITT), and 945–977 (SGLG…KKVD). The span at 631 to 645 (PDQNNESKVTENQPD) shows a compositional bias: polar residues. Composition is skewed to low complexity over residues 778-793 (SALT…TTGG) and 823-835 (PSAS…VSGS). Over residues 849–867 (THREQPQTSYRDRAAERRN) the composition is skewed to basic and acidic residues. A G-patch domain is found at 928–974 (ESNVGNRMLRNMGWHEGSGLGKDGSGMKEPVQAQGVDRRAGLGSQQK).

In terms of assembly, interacts with the pre-spliceosomal component U2AF65A. As to expression, ubiquitous with highest expression in siliques toward the end of seed maturation.

The protein resides in the nucleus. Functionally, splicing factor that controls alternative splicing of the developmental regulator ABI3. Reduces splicing of a cryptic intron in ABI3, leading to a decreased in ABI3-beta transcript. Regulates the splicing of the receptor-like kinase SNC4/LRKL-2.6. The polypeptide is SUPPRESSOR OF ABI3-5 (Arabidopsis thaliana (Mouse-ear cress)).